Consider the following 161-residue polypeptide: Large ribosomal subunit protein uL10 (161 aa).

It belongs to the universal ribosomal protein uL10 family. As to quaternary structure, part of the ribosomal stalk of the 50S ribosomal subunit. The N-terminus interacts with L11 and the large rRNA to form the base of the stalk. The C-terminus forms an elongated spine to which L12 dimers bind in a sequential fashion forming a multimeric L10(L12)X complex.

Forms part of the ribosomal stalk, playing a central role in the interaction of the ribosome with GTP-bound translation factors. The sequence is that of Large ribosomal subunit protein uL10 from Malacoplasma penetrans (strain HF-2) (Mycoplasma penetrans).